We begin with the raw amino-acid sequence, 186 residues long: MKINRLKKYYLQTIVPKLIEQFAYKNQMQVPRLEKIVINRGIGDASQNAKVLESSLKELTIIAGQKGIITRSKKAIAGFKLRQNLPVGVCVTLRGERMYSFLDRLINLALPRIRDFRGMSVESFDGQGNYSLGVEEQLMFPEIVYDKIEQITGMDISIVTSSKTNDEAHALLKEFGMPFKAKGNKN.

This sequence belongs to the universal ribosomal protein uL5 family. In terms of assembly, part of the 50S ribosomal subunit; contacts the 5S rRNA.

It is found in the plastid. It localises to the chloroplast. Binds 5S rRNA, forms part of the central protuberance of the 50S subunit. This Pleurastrum terricola (Filamentous green alga) protein is Large ribosomal subunit protein uL5c (rpl5).